The primary structure comprises 77 residues: DNA-directed RNA polymerase subunit omega (77 aa).

Belongs to the RNA polymerase subunit omega family. The RNAP catalytic core consists of 2 alpha, 1 beta, 1 beta' and 1 omega subunit. When a sigma factor is associated with the core the holoenzyme is formed, which can initiate transcription.

It catalyses the reaction RNA(n) + a ribonucleoside 5'-triphosphate = RNA(n+1) + diphosphate. Its function is as follows. Promotes RNA polymerase assembly. Latches the N- and C-terminal regions of the beta' subunit thereby facilitating its interaction with the beta and alpha subunits. The polypeptide is DNA-directed RNA polymerase subunit omega (Nitratidesulfovibrio vulgaris (strain ATCC 29579 / DSM 644 / CCUG 34227 / NCIMB 8303 / VKM B-1760 / Hildenborough) (Desulfovibrio vulgaris)).